Reading from the N-terminus, the 269-residue chain is 4-hydroxy-tetrahydrodipicolinate reductase (269 aa).

NAD(+)-binding positions include 9-14 and Glu-35; that span reads GAGGRM. Arg-36 provides a ligand contact to NADP(+). NAD(+)-binding positions include 98–100 and 122–125; these read GTT and ASNY. Residue His-155 is the Proton donor/acceptor of the active site. Residue His-156 coordinates (S)-2,3,4,5-tetrahydrodipicolinate. Residue Lys-159 is the Proton donor of the active site. 165-166 contacts (S)-2,3,4,5-tetrahydrodipicolinate; the sequence is GT.

The protein belongs to the DapB family.

The protein resides in the cytoplasm. The catalysed reaction is (S)-2,3,4,5-tetrahydrodipicolinate + NAD(+) + H2O = (2S,4S)-4-hydroxy-2,3,4,5-tetrahydrodipicolinate + NADH + H(+). The enzyme catalyses (S)-2,3,4,5-tetrahydrodipicolinate + NADP(+) + H2O = (2S,4S)-4-hydroxy-2,3,4,5-tetrahydrodipicolinate + NADPH + H(+). The protein operates within amino-acid biosynthesis; L-lysine biosynthesis via DAP pathway; (S)-tetrahydrodipicolinate from L-aspartate: step 4/4. Catalyzes the conversion of 4-hydroxy-tetrahydrodipicolinate (HTPA) to tetrahydrodipicolinate. The sequence is that of 4-hydroxy-tetrahydrodipicolinate reductase from Actinobacillus pleuropneumoniae serotype 3 (strain JL03).